The primary structure comprises 253 residues: Cyclin-C1-2 (253 aa).

Belongs to the cyclin family. Cyclin C subfamily.

The protein is Cyclin-C1-2 (CYCC1-2) of Arabidopsis thaliana (Mouse-ear cress).